The primary structure comprises 199 residues: Recombination protein RecR (199 aa).

Residues 57–72 form a C4-type zinc finger; sequence CEKCNNFTEEVVCELC. Residues 80-175 form the Toprim domain; the sequence is ALLCVVEMPA…KITRIARGLP (96 aa).

The protein belongs to the RecR family.

May play a role in DNA repair. It seems to be involved in an RecBC-independent recombinational process of DNA repair. It may act with RecF and RecO. This chain is Recombination protein RecR, found in Nitrosospira multiformis (strain ATCC 25196 / NCIMB 11849 / C 71).